Consider the following 312-residue polypeptide: Probable phytanoyl-CoA dioxygenase (312 aa).

2-oxoglutarate contacts are provided by residues K84, M124, 142-144 (HQD), and W160. Fe cation contacts are provided by H142 and D144. H231 is a Fe cation binding site. 2 residues coordinate 2-oxoglutarate: S233 and R242.

It belongs to the PhyH family. The cofactor is Fe cation. It depends on L-ascorbate as a cofactor.

It catalyses the reaction phytanoyl-CoA + 2-oxoglutarate + O2 = 2-hydroxyphytanoyl-CoA + succinate + CO2. The protein operates within lipid metabolism; fatty acid metabolism. In terms of biological role, converts phytanoyl-CoA to 2-hydroxyphytanoyl-CoA. The sequence is that of Probable phytanoyl-CoA dioxygenase from Caenorhabditis elegans.